The sequence spans 603 residues: Coiled-coil domain-containing protein 148 (603 aa).

Coiled coils occupy residues 365–429 (LAKD…KKKK) and 461–510 (EQSL…KQVA).

The protein is Coiled-coil domain-containing protein 148 (CCDC148) of Macaca fascicularis (Crab-eating macaque).